The primary structure comprises 272 residues: Sugar-phosphatase AraL (272 aa).

It belongs to the HAD-like hydrolase superfamily. It depends on Mg(2+) as a cofactor.

It catalyses the reaction sugar phosphate + H2O = sugar + phosphate.. It carries out the reaction O-phospho-L-serine + H2O = L-serine + phosphate. The catalysed reaction is O-phospho-D-serine + H2O = D-serine + phosphate. Its function is as follows. Catalyzes the dephosphorylation of C5 and C6 carbon sugars in vitro. Catalyzes the dephosphorylation of 3'-AMP and phosphoserine in vitro. The protein is Sugar-phosphatase AraL (araL) of Bacillus subtilis (strain 168).